The sequence spans 471 residues: ATP synthase subunit beta (471 aa).

156-163 (GGAGVGKT) contributes to the ATP binding site.

Belongs to the ATPase alpha/beta chains family. As to quaternary structure, F-type ATPases have 2 components, CF(1) - the catalytic core - and CF(0) - the membrane proton channel. CF(1) has five subunits: alpha(3), beta(3), gamma(1), delta(1), epsilon(1). CF(0) has three main subunits: a(1), b(2) and c(9-12). The alpha and beta chains form an alternating ring which encloses part of the gamma chain. CF(1) is attached to CF(0) by a central stalk formed by the gamma and epsilon chains, while a peripheral stalk is formed by the delta and b chains.

It localises to the cell membrane. The enzyme catalyses ATP + H2O + 4 H(+)(in) = ADP + phosphate + 5 H(+)(out). Produces ATP from ADP in the presence of a proton gradient across the membrane. The catalytic sites are hosted primarily by the beta subunits. The chain is ATP synthase subunit beta from Mycoplasmoides gallisepticum (strain R(low / passage 15 / clone 2)) (Mycoplasma gallisepticum).